The following is a 33-amino-acid chain: MSDIN-like toxin proprotein 5 (33 aa).

The propeptide occupies 1–10 (MSDINATRLP). The segment at residues 11 to 18 (IFWFIYFP) is a cross-link (cyclopeptide (Ile-Pro)). Positions 19–32 (CVGDNVDNTLTRGE) are excised as a propeptide.

This sequence belongs to the MSDIN fungal toxin family. Post-translationally, processed by the macrocyclase-peptidase enzyme POPB to yield a toxic cyclic octapeptide. POPB first removes 10 residues from the N-terminus. Conformational trapping of the remaining peptide forces the enzyme to release this intermediate rather than proceed to macrocyclization. The enzyme rebinds the remaining peptide in a different conformation and catalyzes macrocyclization of the N-terminal 8 residues.

Probable toxin that belongs to the MSDIN-like toxin family responsible for a large number of food poisoning cases and deaths. The polypeptide is MSDIN-like toxin proprotein 5 (Amanita phalloides (Death cap)).